Here is an 886-residue protein sequence, read N- to C-terminus: Alanine--tRNA ligase (886 aa).

Residues His-568, His-572, Cys-670, and His-674 each coordinate Zn(2+).

This sequence belongs to the class-II aminoacyl-tRNA synthetase family. Requires Zn(2+) as cofactor.

It is found in the cytoplasm. It catalyses the reaction tRNA(Ala) + L-alanine + ATP = L-alanyl-tRNA(Ala) + AMP + diphosphate. Functionally, catalyzes the attachment of alanine to tRNA(Ala) in a two-step reaction: alanine is first activated by ATP to form Ala-AMP and then transferred to the acceptor end of tRNA(Ala). Also edits incorrectly charged Ser-tRNA(Ala) and Gly-tRNA(Ala) via its editing domain. In Prochlorococcus marinus (strain NATL1A), this protein is Alanine--tRNA ligase.